The chain runs to 270 residues: Glutamate racemase (270 aa).

Substrate-binding positions include 10 to 11 and 42 to 43; these read DS and YG. Residue Cys-74 is the Proton donor/acceptor of the active site. Position 75 to 76 (75 to 76) interacts with substrate; that stretch reads NT. The active-site Proton donor/acceptor is the Cys-189. Residue 190-191 participates in substrate binding; the sequence is TH.

It belongs to the aspartate/glutamate racemases family.

The catalysed reaction is L-glutamate = D-glutamate. It functions in the pathway cell wall biogenesis; peptidoglycan biosynthesis. In terms of biological role, provides the (R)-glutamate required for cell wall biosynthesis. The sequence is that of Glutamate racemase from Bartonella henselae (strain ATCC 49882 / DSM 28221 / CCUG 30454 / Houston 1) (Rochalimaea henselae).